Reading from the N-terminus, the 117-residue chain is Hydrogenase maturation factor HypA (117 aa).

H2 is a Ni(2+) binding site. The Zn(2+) site is built by C73, C76, C90, and C93.

The protein belongs to the HypA/HybF family.

Involved in the maturation of [NiFe] hydrogenases. Required for nickel insertion into the metal center of the hydrogenase. This Pectobacterium atrosepticum (strain SCRI 1043 / ATCC BAA-672) (Erwinia carotovora subsp. atroseptica) protein is Hydrogenase maturation factor HypA.